Here is a 318-residue protein sequence, read N- to C-terminus: Glycine--tRNA ligase alpha subunit (318 aa).

The protein belongs to the class-II aminoacyl-tRNA synthetase family. Tetramer of two alpha and two beta subunits.

It is found in the cytoplasm. It catalyses the reaction tRNA(Gly) + glycine + ATP = glycyl-tRNA(Gly) + AMP + diphosphate. This Moraxella catarrhalis (Branhamella catarrhalis) protein is Glycine--tRNA ligase alpha subunit (glyQ).